Reading from the N-terminus, the 216-residue chain is Phosphoserine phosphatase (216 aa).

D10 functions as the Nucleophile in the catalytic mechanism. Mg(2+) contacts are provided by D10 and D12. D12 serves as the catalytic Proton donor. Substrate-binding positions include E19, R55, 98 to 99 (SG), and K143. Residue D166 coordinates Mg(2+). A substrate-binding site is contributed by N169.

This sequence belongs to the HAD-like hydrolase superfamily. SerB family. Mg(2+) serves as cofactor.

The enzyme catalyses O-phospho-L-serine + H2O = L-serine + phosphate. The catalysed reaction is O-phospho-D-serine + H2O = D-serine + phosphate. It participates in amino-acid biosynthesis; L-serine biosynthesis; L-serine from 3-phospho-D-glycerate: step 3/3. The protein is Phosphoserine phosphatase of Lactococcus lactis subsp. lactis (strain IL1403) (Streptococcus lactis).